The sequence spans 98 residues: Major carboxysome shell protein CsoS1A (98 aa).

The 86-residue stretch at 8–93 (ALGMIETRGL…VHSEVENILP (86 aa)) folds into the BMC domain.

This sequence belongs to the bacterial microcompartments protein family. CsoS1 subfamily. In terms of assembly, homohexamer with a small central pore; the concave side is mostly positive electrostatic potential, whereas the convex side is mostly negative electrostatic potential. Forms a CsoS2-CsoS1-RuBisCO complex. Interacts with the N-terminus (residues 1-136) of RuBisCO (CbbL).

The protein localises to the carboxysome. In terms of biological role, the major shell protein of the carboxysome, a polyhedral inclusion where RuBisCO (ribulose bisphosphate carboxylase, ccbL-ccbS) is sequestered. Assembles into hexamers which make sheets that form the facets of the polyhedral carboxysome. The shell probably limits the diffusion of CO(2) into and out of the carboxysome. Molecular modeling shows the central pore of this protein is selectively permeable to anions such as HCO(3) rather than CO(2) or O(2). There are estimated to be 2970 CsoS1A/CsoS1C proteins per carboxysome (the proteins differ by only 1 residue). Functionally, unlike beta-carboxysomes, alpha-carboxysomes (Cb) can form without cargo protein. CsoS2 is essential for Cb formation and is also capable of targeting foreign proteins to the Cb. The Cb shell assembles with the aid of CsoS2; CsoS1A, CsoS1B and CsoS1C form the majority of the shell while CsoS4A and CsoS4B form vertices. CsoS1D forms pseudohexamers that probably control metabolite flux into and out of the shell. In Halothiobacillus neapolitanus (strain ATCC 23641 / c2) (Thiobacillus neapolitanus), this protein is Major carboxysome shell protein CsoS1A.